The following is a 163-amino-acid chain: Ribonuclease P protein subunit p25-like protein (163 aa).

Disordered regions lie at residues 1–22 (MEHY…PQLP) and 129–163 (NECG…DTRS). The segment covering 143-152 (GSMPSSSCGP) has biased composition (low complexity). The segment covering 153-163 (RSRRRARDTRS) has biased composition (basic residues).

The protein belongs to the histone-like Alba family.

It is found in the nucleus. In terms of biological role, may be a component of ribonuclease P or MRP. The chain is Ribonuclease P protein subunit p25-like protein (RPP25L) from Homo sapiens (Human).